The chain runs to 198 residues: Nucleoside triphosphate pyrophosphatase (198 aa).

Asp72 functions as the Proton acceptor in the catalytic mechanism.

This sequence belongs to the Maf family. It depends on a divalent metal cation as a cofactor.

The protein resides in the cytoplasm. The catalysed reaction is a ribonucleoside 5'-triphosphate + H2O = a ribonucleoside 5'-phosphate + diphosphate + H(+). It carries out the reaction a 2'-deoxyribonucleoside 5'-triphosphate + H2O = a 2'-deoxyribonucleoside 5'-phosphate + diphosphate + H(+). Nucleoside triphosphate pyrophosphatase. May have a dual role in cell division arrest and in preventing the incorporation of modified nucleotides into cellular nucleic acids. This is Nucleoside triphosphate pyrophosphatase from Corynebacterium aurimucosum (strain ATCC 700975 / DSM 44827 / CIP 107346 / CN-1) (Corynebacterium nigricans).